The following is a 425-amino-acid chain: 3-phosphoshikimate 1-carboxyvinyltransferase (425 aa).

3-phosphoshikimate-binding residues include lysine 20, serine 21, and arginine 25. Lysine 20 is a binding site for phosphoenolpyruvate. Phosphoenolpyruvate is bound by residues glycine 92 and arginine 120. 3-phosphoshikimate is bound by residues serine 165, glutamine 167, aspartate 312, and lysine 339. Glutamine 167 serves as a coordination point for phosphoenolpyruvate. Aspartate 312 (proton acceptor) is an active-site residue. Residues arginine 343 and arginine 385 each contribute to the phosphoenolpyruvate site.

This sequence belongs to the EPSP synthase family. In terms of assembly, monomer.

It is found in the cytoplasm. The catalysed reaction is 3-phosphoshikimate + phosphoenolpyruvate = 5-O-(1-carboxyvinyl)-3-phosphoshikimate + phosphate. It participates in metabolic intermediate biosynthesis; chorismate biosynthesis; chorismate from D-erythrose 4-phosphate and phosphoenolpyruvate: step 6/7. Its function is as follows. Catalyzes the transfer of the enolpyruvyl moiety of phosphoenolpyruvate (PEP) to the 5-hydroxyl of shikimate-3-phosphate (S3P) to produce enolpyruvyl shikimate-3-phosphate and inorganic phosphate. The sequence is that of 3-phosphoshikimate 1-carboxyvinyltransferase from Alkaliphilus metalliredigens (strain QYMF).